Reading from the N-terminus, the 1121-residue chain is CRISPR-associated endonuclease Cas9 1 (1121 aa).

Asp-9 acts as the For RuvC-like nuclease domain in catalysis. Positions 9, 509, and 513 each coordinate Mg(2+). The 169-residue stretch at 516–684 (EDDEKKAIQK…VRKKFIERNL (169 aa)) folds into the HNH Cas9-type domain. The active-site Proton acceptor for HNH nuclease domain is the His-599. His-738 contributes to the Mg(2+) binding site.

The protein belongs to the CRISPR-associated protein Cas9 family. Subtype II-A subfamily. As to quaternary structure, monomer. Binds crRNA and tracrRNA. The cofactor is Mg(2+).

Its function is as follows. CRISPR (clustered regularly interspaced short palindromic repeat) is an adaptive immune system that provides protection against mobile genetic elements (viruses, transposable elements and conjugative plasmids). CRISPR clusters contain spacers, sequences complementary to antecedent mobile elements, and target invading nucleic acids. CRISPR clusters are transcribed and processed into CRISPR RNA (crRNA). In type II CRISPR systems correct processing of pre-crRNA requires a trans-encoded small RNA (tracrRNA), endogenous ribonuclease 3 (rnc) and this protein. The tracrRNA serves as a guide for ribonuclease 3-aided processing of pre-crRNA. Subsequently Cas9/crRNA/tracrRNA endonucleolytically cleaves linear or circular dsDNA target complementary to the spacer; Cas9 is inactive in the absence of the 2 guide RNAs (gRNA). Cas9 recognizes the protospacer adjacent motif (PAM) in the CRISPR repeat sequences to help distinguish self versus nonself, as targets within the bacterial CRISPR locus do not have PAMs. PAM recognition is also required for catalytic activity. Cuts target DNA when Cas9 and gRNAs are mixed. The polypeptide is CRISPR-associated endonuclease Cas9 1 (Streptococcus thermophilus (strain ATCC BAA-491 / LMD-9)).